Reading from the N-terminus, the 519-residue chain is Probable DNA ligase (519 aa).

E221 is a binding site for ATP. Catalysis depends on K223, which acts as the N6-AMP-lysine intermediate. ATP contacts are provided by R228, R243, E272, F312, R384, and K390.

The protein belongs to the ATP-dependent DNA ligase family. Mg(2+) serves as cofactor.

It carries out the reaction ATP + (deoxyribonucleotide)n-3'-hydroxyl + 5'-phospho-(deoxyribonucleotide)m = (deoxyribonucleotide)n+m + AMP + diphosphate.. Functionally, DNA ligase that seals nicks in double-stranded DNA during DNA replication, DNA recombination and DNA repair. This chain is Probable DNA ligase, found in Mycolicibacterium paratuberculosis (strain ATCC BAA-968 / K-10) (Mycobacterium paratuberculosis).